Here is a 311-residue protein sequence, read N- to C-terminus: tRNA(Ile)-lysidine synthase (311 aa).

31 to 36 (SGGKDS) provides a ligand contact to ATP.

This sequence belongs to the tRNA(Ile)-lysidine synthase family.

The protein localises to the cytoplasm. The catalysed reaction is cytidine(34) in tRNA(Ile2) + L-lysine + ATP = lysidine(34) in tRNA(Ile2) + AMP + diphosphate + H(+). In terms of biological role, ligates lysine onto the cytidine present at position 34 of the AUA codon-specific tRNA(Ile) that contains the anticodon CAU, in an ATP-dependent manner. Cytidine is converted to lysidine, thus changing the amino acid specificity of the tRNA from methionine to isoleucine. The sequence is that of tRNA(Ile)-lysidine synthase from Petrotoga mobilis (strain DSM 10674 / SJ95).